A 345-amino-acid chain; its full sequence is Heat-inducible transcription repressor HrcA (345 aa).

This sequence belongs to the HrcA family.

Functionally, negative regulator of class I heat shock genes (grpE-dnaK-dnaJ and groELS operons). Prevents heat-shock induction of these operons. This chain is Heat-inducible transcription repressor HrcA, found in Listeria welshimeri serovar 6b (strain ATCC 35897 / DSM 20650 / CCUG 15529 / CIP 8149 / NCTC 11857 / SLCC 5334 / V8).